The chain runs to 756 residues: Xylosyl- and glucuronyltransferase LARGE1 (756 aa).

Residues 1–10 (MLGICRGRRK) lie on the Cytoplasmic side of the membrane. The chain crosses the membrane as a helical; Signal-anchor for type II membrane protein span at residues 11–31 (FLAASLTLLCIPAITWIYLFA). The Lumenal segment spans residues 32–756 (GSFEDGKPVS…LKYLTAENNS (725 aa)). 2 disordered regions span residues 43 to 64 (SPLESQAHSPRYTASSQRERES) and 82 to 108 (QLSLAQGQSPAHHRGNHSKTYSMEEGT). Polar residues predominate over residues 44–58 (PLESQAHSPRYTASS). A coiled-coil region spans residues 53 to 95 (RYTASSQRERESLEVRVREVEEENRALRRQLSLAQGQSPAHHR). N-linked (GlcNAc...) asparagine glycans are attached at residues Asn-97, Asn-122, and Asn-148. The interval 138 to 413 (IHVAIVCAGY…FLEYDGNLLR (276 aa)) is xylosyltransferase activity. The Mn(2+) site is built by Asp-242 and Asp-244. A glycan (N-linked (GlcNAc...) asparagine) is linked at Asn-272. A glucuronyltransferase activity region spans residues 414-756 (RELFGCPSET…LKYLTAENNS (343 aa)). The Mn(2+) site is built by Asp-563 and Asp-565.

This sequence in the C-terminal section; belongs to the glycosyltransferase 49 family. It in the N-terminal section; belongs to the glycosyltransferase 8 family. In terms of assembly, interacts with DAG1 (via the N-terminal domain of alpha-DAG1); the interaction increases binding of DAG1 to laminin. Interacts with B4GAT1. Mn(2+) serves as cofactor. Ubiquitous. Highest expression in heart, diaphragm and brain, where it is especially found in cerebral cortex, hippocampus, and trigeminal ganglion.

It localises to the golgi apparatus membrane. The enzyme catalyses 3-O-[beta-D-GlcA-(1-&gt;3)-beta-D-Xyl-(1-&gt;4)-Rib-ol-P-Rib-ol-P-3-beta-D-GalNAc-(1-&gt;3)-beta-D-GlcNAc-(1-&gt;4)-(O-6-P-alpha-D-Man)]-Thr-[protein] + UDP-alpha-D-xylose = 3-O-[alpha-D-Xyl-(1-&gt;3)-beta-D-GlcA-(1-&gt;4)-beta-D-Xyl-(1-&gt;4)-Rib-ol-P-Rib-ol-P-3-beta-D-GalNAc-(1-&gt;3)-beta-D-GlcNAc-(1-&gt;4)-(O-6-P-alpha-D-Man)]-Thr-[protein] + UDP + H(+). The catalysed reaction is 3-O-{(1-&gt;[3)-alpha-D-Xyl-(1-&gt;3)-beta-D-GlcA-(1-&gt;](n)-4)-beta-D-Xyl-(1-&gt;4)-Rib-ol-P-Rib-ol-P-3-beta-D-GalNAc-(1-&gt;3)-beta-D-GlcNAc-(1-&gt;4)-O-6-P-alpha-D-Man}-L-Thr-[protein] + UDP-alpha-D-glucuronate = 3-O-{beta-D-GlcA-(1-&gt;[3)-alpha-D-Xyl-(1-&gt;3)-beta-D-GlcA-(1-&gt;](n)-4)-beta-D-Xyl-(1-&gt;4)-Rib-ol-P-Rib-ol-P-3-beta-D-GalNAc-(1-&gt;3)-beta-D-GlcNAc-(1-&gt;4)-O-6-P-alpha-D-Man}-L-Thr-[protein] + UDP + H(+). It catalyses the reaction 3-O-{beta-D-GlcA-(1-&gt;[3)-alpha-D-Xyl-(1-&gt;3)-beta-D-GlcA-(1-&gt;](n)-4)-beta-D-Xyl-(1-&gt;4)-Rib-ol-P-Rib-ol-P-3-beta-D-GalNAc-(1-&gt;3)-beta-D-GlcNAc-(1-&gt;4)-O-6-P-alpha-D-Man}-L-Thr-[protein] + UDP-alpha-D-xylose = 3-O-{(1-&gt;[3)-alpha-D-Xyl-(1-&gt;3)-beta-D-GlcA-(1-&gt;](n+1)-4)-beta-D-Xyl-(1-&gt;4)-Rib-ol-P-Rib-ol-P-3-beta-D-GalNAc-(1-&gt;3)-beta-D-GlcNAc-(1-&gt;4)-O-6-P-alpha-D-Man}-L-Thr-[protein] + UDP + H(+). It participates in protein modification; protein glycosylation. Bifunctional glycosyltransferase with both alpha-1,3-xylosyltransferase and beta-1,3-glucuronyltransferase activities involved in the maturation of alpha-dystroglycan (DAG1) by glycosylation leading to DAG1 binding to laminin G-like domain-containing extracellular proteins with high affinity. Elongates the glucuronyl-beta-1,4-xylose-beta disaccharide primer structure initiated by B4GAT1 by adding repeating units [-3-Xylose-alpha-1,3-GlcA-beta-1-] to produce a heteropolysaccharide. Requires the phosphorylation of core M3 (O-mannosyl trisaccharide) by POMK to elongate the glucuronyl-beta-1,4-xylose-beta disaccharide primer. Plays a key role in skeletal muscle function and regeneration. This Mus musculus (Mouse) protein is Xylosyl- and glucuronyltransferase LARGE1.